A 1117-amino-acid polypeptide reads, in one-letter code: WD repeat and HMG-box DNA-binding protein 1 (1117 aa).

WD repeat units lie at residues 11 to 50, 52 to 91, 93 to 131, 134 to 173, 184 to 223, 228 to 267, and 271 to 310; these read GHTEGHTEVCFDDSGSYIVTCGSDGDVRMWEDLDDDDPKS, NVGEKAFSCALKNGKLVTAVSNNTVQVYTFPEGVPDGILT, FTTNANHVVFNGAGNKIAAGSSDFLVKVVDVMDNSQQQT, GHDAPVLSLSFDPKDIFLASASCDGTVRVWNISDQTCAVS, VNAKSICRLAWQPKAGKLLAVPVEKSVKLYRRETWSNPFD, SISQTLNIVTWSPCGQYLAAGAINGLIVVWNVETKDCMER, and EKGYAICGLAWHPTCSRICYTDVEGNLGVLENVCDLSGKV. Ser-333 and Ser-377 each carry phosphoserine. Lys-390 participates in a covalent cross-link: Glycyl lysine isopeptide (Lys-Gly) (interchain with G-Cter in SUMO2). Lys-664 carries the post-translational modification N6-acetyllysine. The segment at 816 to 885 is disordered; sequence LAETQSEEEK…NLFQSANSSD (70 aa). Residue Thr-819 is modified to Phosphothreonine. Ser-821 carries the post-translational modification Phosphoserine. Positions 861 to 872 are enriched in basic and acidic residues; sequence DTVSEEKPESHN. Positions 873-885 are enriched in polar residues; sequence HGQNLFQSANSSD. Phosphoserine is present on residues Ser-910 and Ser-923. The segment at 911–1005 is disordered; sequence SKEPAVSANS…AVCLQNSENQ (95 aa). Residues 917–943 are compositionally biased toward polar residues; the sequence is SANSTRSANILDSMNKSSRKSTSLNRM. An N6-acetyllysine modification is found at Lys-953. Residues 962–974 show a composition bias toward polar residues; sequence KQASAASYFQKRT. Residues 975 to 987 are compositionally biased toward basic and acidic residues; that stretch reads PQADKTEEVKENP. Over residues 988 to 1004 the composition is skewed to polar residues; the sequence is KSSSSDAPAVCLQNSEN. A DNA-binding region (HMG box) is located at residues 1004-1073; that stretch reads NQRPKTGFQM…SDGAEAKKRK (70 aa). Position 1030 is a phosphoserine (Ser-1030). The segment at 1054-1074 is disordered; that stretch reads WTNKAKGETASDGAEAKKRKR. Lys-1116 participates in a covalent cross-link: Glycyl lysine isopeptide (Lys-Gly) (interchain with G-Cter in SUMO1); alternate. A Glycyl lysine isopeptide (Lys-Gly) (interchain with G-Cter in SUMO2); alternate cross-link involves residue Lys-1116.

In terms of assembly, trimer. Interacts with the polymerase alpha catalytic subunit POLA1. Interacts with MCM10. Interacts with DNA2. Interacts with CDC45 and GINS2 subunit of GINS complex; these interactions associate WDHD1 with the CMG helicase complex.

The protein localises to the nucleus. The protein resides in the nucleoplasm. In terms of biological role, core replisome component that acts as a replication initiation factor. Binds directly to the CMG complex and functions as a hub to recruit additional proteins to the replication fork. This Mus musculus (Mouse) protein is WD repeat and HMG-box DNA-binding protein 1 (Wdhd1).